Reading from the N-terminus, the 348-residue chain is Histidinol-phosphate aminotransferase (348 aa).

Position 211 is an N6-(pyridoxal phosphate)lysine (K211).

Belongs to the class-II pyridoxal-phosphate-dependent aminotransferase family. Histidinol-phosphate aminotransferase subfamily. As to quaternary structure, homodimer. Pyridoxal 5'-phosphate is required as a cofactor.

It carries out the reaction L-histidinol phosphate + 2-oxoglutarate = 3-(imidazol-4-yl)-2-oxopropyl phosphate + L-glutamate. The protein operates within amino-acid biosynthesis; L-histidine biosynthesis; L-histidine from 5-phospho-alpha-D-ribose 1-diphosphate: step 7/9. The chain is Histidinol-phosphate aminotransferase from Chlorobaculum tepidum (strain ATCC 49652 / DSM 12025 / NBRC 103806 / TLS) (Chlorobium tepidum).